The following is a 445-amino-acid chain: N-succinylarginine dihydrolase (445 aa).

Residues 19–28 (AGLSFGNVAS), N110, and 137–138 (HR) contribute to the substrate site. E174 is a catalytic residue. Residue R214 coordinates substrate. H250 is an active-site residue. Residues D252 and N363 each coordinate substrate. The active-site Nucleophile is C369.

It belongs to the succinylarginine dihydrolase family. In terms of assembly, homodimer.

The catalysed reaction is N(2)-succinyl-L-arginine + 2 H2O + 2 H(+) = N(2)-succinyl-L-ornithine + 2 NH4(+) + CO2. The protein operates within amino-acid degradation; L-arginine degradation via AST pathway; L-glutamate and succinate from L-arginine: step 2/5. Functionally, catalyzes the hydrolysis of N(2)-succinylarginine into N(2)-succinylornithine, ammonia and CO(2). This chain is N-succinylarginine dihydrolase, found in Shewanella woodyi (strain ATCC 51908 / MS32).